Here is a 1091-residue protein sequence, read N- to C-terminus: Sodium/potassium exporting P-type ATPase 2 (1091 aa).

Residues 1-63 (MSEGTVKENN…LGDDTKIDYK (63 aa)) lie on the Cytoplasmic side of the membrane. The helical transmembrane segment at 64–84 (AMVLHQVCNAMIMVLVISMAI) threads the bilayer. The Extracellular portion of the chain corresponds to 85–90 (SFAVRD). A helical transmembrane segment spans residues 91 to 111 (WITGGVISFVIAVNVLIGLVQ). Over 112–282 (EYKATKTMNS…TNVGTPLHRK (171 aa)) the chain is Cytoplasmic. Residues 283–303 (LSKLAVLLFWIAVLFAIIVMA) traverse the membrane as a helical segment. The Extracellular segment spans residues 304 to 312 (SQKFDVDKR). Residues 313 to 333 (VAIYAICVALSMIPSSLVVVL) traverse the membrane as a helical segment. Over 334 to 815 (TITMSVGAAV…RRMTDNIQKF (482 aa)) the chain is Cytoplasmic. Catalysis depends on Asp-369, which acts as the 4-aspartylphosphate intermediate. The Mg(2+) site is built by Asp-369 and Thr-371. Residues Thr-371 and Glu-483 each contribute to the ATP site. Residues 499–525 (ALTGEKSTNQSNENDQSSLSQHNEKPG) are disordered. Residues 503–519 (EKSTNQSNENDQSSLSQ) show a composition bias toward polar residues. ATP is bound by residues Lys-561, Arg-606, Thr-673, Gly-674, Asp-675, Arg-732, and Lys-738. Asp-757 contacts Mg(2+). Residue Asn-760 participates in ATP binding. A helical transmembrane segment spans residues 816–836 (VLQLLAENVAQALYLIIGLVF). Topologically, residues 837 to 848 (RDENGKSVFPLS) are extracellular. The chain crosses the membrane as a helical span at residues 849 to 869 (PVEVLWIIVVTSCFPAMGLGL). Residues 870-885 (EKAAPDLMDRPPHDSE) lie on the Cytoplasmic side of the membrane. The chain crosses the membrane as a helical span at residues 886–906 (VGIFTWEVIIDTFAYGIIMTG). Topologically, residues 907–943 (SCMASFTGSLYGINSGRLGHDCDGTYNSSCRDVYRSR) are extracellular. A helical transmembrane segment spans residues 944–964 (SAAFATMTWCALILAWEVVDM). At 965 to 991 (RRSFFRMHPDTDSPVKEFFRSIWGNQF) the chain is on the cytoplasmic side. A helical transmembrane segment spans residues 992 to 1012 (LFWSIIFGFVSAFPVVYIPVI). Over 1013-1021 (NDKVFLHKP) the chain is Extracellular. Residues 1022–1042 (IGAEWGLAIAFTIAFWIGAEL) traverse the membrane as a helical segment. The Cytoplasmic portion of the chain corresponds to 1043-1091 (YKCGKRRYFKTQRAHNPENDLESNNKRDPFEAYSTSTTIHTEVNIGIKQ).

It belongs to the cation transport ATPase (P-type) (TC 3.A.3) family. Type IID subfamily. It depends on Mg(2+) as a cofactor. In terms of processing, the active site is phosphorylated in presence of sodium or potassium and in conditions of higher pH. Not phosphorylated in presence of calcium ions.

It localises to the cell membrane. It carries out the reaction Na(+)(in) + ATP + H2O = Na(+)(out) + ADP + phosphate + H(+). The catalysed reaction is K(+)(in) + ATP + H2O = K(+)(out) + ADP + phosphate + H(+). Its function is as follows. Catalyzes the hydrolysis of ATP coupled with the export of sodium and potassium from the cell. May export potassium less efficiently. May transport other cations such as lithium. Sodium/potassium efflux ATPases are involved in salt tolerance and maintaining the membrane potential across the plasma membrane in high salinity (Na+) or alkaline (K+) environments. The chain is Sodium/potassium exporting P-type ATPase 2 from Saccharomyces cerevisiae (strain ATCC 204508 / S288c) (Baker's yeast).